Reading from the N-terminus, the 122-residue chain is Large ribosomal subunit protein uL14 (122 aa).

The protein belongs to the universal ribosomal protein uL14 family. Part of the 50S ribosomal subunit. Forms a cluster with proteins L3 and L19. In the 70S ribosome, L14 and L19 interact and together make contacts with the 16S rRNA in bridges B5 and B8.

Functionally, binds to 23S rRNA. Forms part of two intersubunit bridges in the 70S ribosome. This chain is Large ribosomal subunit protein uL14, found in Streptococcus pyogenes serotype M2 (strain MGAS10270).